We begin with the raw amino-acid sequence, 373 residues long: Probable ethanolamine permease EutH (373 aa).

A run of 10 helical transmembrane segments spans residues glutamate 5–glycine 25, isoleucine 38–leucine 58, isoleucine 61–alanine 81, isoleucine 111–isoleucine 131, valine 143–phenylalanine 163, isoleucine 166–leucine 186, phenylalanine 197–isoleucine 217, isoleucine 236–isoleucine 256, valine 307–valine 327, and methionine 331–isoleucine 351.

This sequence belongs to the EutH family.

The protein localises to the cell membrane. It catalyses the reaction ethanolamine(in) = ethanolamine(out). Probably involved in the diffusion of protonated ethanolamine (EA) into the cell at low pH. At low pH most EA is protonated, and this permease becomes necessary. Contributes to bacterial survival and replication in acidic macrophage vacuoles, but not to bacterial uptake by macrophages. The chain is Probable ethanolamine permease EutH from Listeria monocytogenes serotype 1/2a (strain 10403S).